The sequence spans 113 residues: Antisense of depressing factor protein 1 (113 aa).

Over residues 1–11 (MGKCSMKKKGV) the composition is skewed to basic residues. Residues 1–35 (MGKCSMKKKGVGKNVGVGKKVQKKRSISTAERKRT) are disordered.

Belongs to the ADF1 family.

It is found in the nucleus. In terms of biological role, transcriptional repressor which negatively regulates transcription of FYV5 by binding to the promoter on the sense strand. The sequence is that of Antisense of depressing factor protein 1 from Saccharomyces cerevisiae (strain ATCC 204508 / S288c) (Baker's yeast).